Here is an 891-residue protein sequence, read N- to C-terminus: Inter-alpha-trypsin inhibitor heavy chain H3 (891 aa).

The first 20 residues, 1–20 (MALAQWPYLILALLSGLAVS), serve as a signal peptide directing secretion. Residues 21-34 (GFPRNPSLLLGKRS) constitute a propeptide that is removed on maturation. In terms of domain architecture, VIT spans 29-158 (LLGKRSLPGR…KVTFELTYEE (130 aa)). Asn91 carries N-linked (GlcNAc...) asparagine glycosylation. A VWFA domain is found at 284–467 (SVVFVIDVSG…LQLQGFYEEV (184 aa)). An Aspartate 1-(chondroitin 4-sulfate)-ester modification is found at Asp651. Residues 652–891 (PHFIIQIPEK…HRDYIVPNLF (240 aa)) constitute a propeptide that is removed on maturation.

This sequence belongs to the ITIH family. I-alpha-I plasma protease inhibitors are assembled from one or two heavy chains (H1, H2 or H3) and one light chain, bikunin. Inter-alpha-inhibitor (I-alpha-I) is composed of H1, H2 and bikunin, inter-alpha-like inhibitor (I-alpha-LI) of H2 and bikunin, and pre-alpha-inhibitor (P-alpha-I) of H3 and bikunin.

It is found in the secreted. In terms of biological role, may act as a carrier of hyaluronan in serum or as a binding protein between hyaluronan and other matrix protein, including those on cell surfaces in tissues to regulate the localization, synthesis and degradation of hyaluronan which are essential to cells undergoing biological processes. This is Inter-alpha-trypsin inhibitor heavy chain H3 (ITIH3) from Bos taurus (Bovine).